Consider the following 143-residue polypeptide: Ribosome maturation factor RimP (143 aa).

It belongs to the RimP family.

Its subcellular location is the cytoplasm. Its function is as follows. Required for maturation of 30S ribosomal subunits. The protein is Ribosome maturation factor RimP of Neisseria meningitidis serogroup C / serotype 2a (strain ATCC 700532 / DSM 15464 / FAM18).